A 91-amino-acid polypeptide reads, in one-letter code: MARMVHCVKLNKEAEGLDFPPLPGELGKKIWQSVSKEAWAGWLKHQTMLINENRLNMADTRARQYLLKQTEKYFFGEGADQASGYVPPPSA.

It belongs to the Fe(2+)-trafficking protein family.

Functionally, could be a mediator in iron transactions between iron acquisition and iron-requiring processes, such as synthesis and/or repair of Fe-S clusters in biosynthetic enzymes. This chain is Probable Fe(2+)-trafficking protein, found in Ralstonia nicotianae (strain ATCC BAA-1114 / GMI1000) (Ralstonia solanacearum).